The chain runs to 695 residues: Polyribonucleotide nucleotidyltransferase (695 aa).

Positions 488 and 494 each coordinate Mg(2+). A KH domain is found at 554-613 (PKTTIIKIKTDKIRDLIGRGGETIKGIISTSCASIDVDDSGNVNIFSNNQKSFDTAVQMV). An S1 motif domain is found at 623–690 (NKVYTGKVVK…DRGRIKLSRK (68 aa)).

Belongs to the polyribonucleotide nucleotidyltransferase family. In terms of assembly, component of the RNA degradosome, which is a multiprotein complex involved in RNA processing and mRNA degradation. It depends on Mg(2+) as a cofactor.

The protein resides in the cytoplasm. The catalysed reaction is RNA(n+1) + phosphate = RNA(n) + a ribonucleoside 5'-diphosphate. Functionally, involved in mRNA degradation. Catalyzes the phosphorolysis of single-stranded polyribonucleotides processively in the 3'- to 5'-direction. In Vesicomyosocius okutanii subsp. Calyptogena okutanii (strain HA), this protein is Polyribonucleotide nucleotidyltransferase.